We begin with the raw amino-acid sequence, 521 residues long: Apolipoprotein N-acyltransferase (521 aa).

A run of 5 helical transmembrane segments spans residues 24 to 44, 71 to 91, 128 to 148, 151 to 171, and 182 to 202; these read IKET…FIAL, WLGF…IGYI, IGFL…FNNL, IADI…NSGI, and NLLN…YGMI. In terms of domain architecture, CN hydrolase spans 218 to 472; the sequence is LNIAAIQLNT…KGYLLSTVKL (255 aa). Glutamate 263 acts as the Proton acceptor in catalysis. Residue lysine 331 is part of the active site. The active-site Nucleophile is the cysteine 383.

It belongs to the CN hydrolase family. Apolipoprotein N-acyltransferase subfamily.

It localises to the cell inner membrane. It catalyses the reaction N-terminal S-1,2-diacyl-sn-glyceryl-L-cysteinyl-[lipoprotein] + a glycerophospholipid = N-acyl-S-1,2-diacyl-sn-glyceryl-L-cysteinyl-[lipoprotein] + a 2-acyl-sn-glycero-3-phospholipid + H(+). Its pathway is protein modification; lipoprotein biosynthesis (N-acyl transfer). Functionally, catalyzes the phospholipid dependent N-acylation of the N-terminal cysteine of apolipoprotein, the last step in lipoprotein maturation. The protein is Apolipoprotein N-acyltransferase of Borreliella burgdorferi (strain ATCC 35210 / DSM 4680 / CIP 102532 / B31) (Borrelia burgdorferi).